Here is a 219-residue protein sequence, read N- to C-terminus: uncharacterized protein (219 aa).

It to T.pallidum TP_0126.

This is an uncharacterized protein from Treponema pallidum (strain Nichols).